The primary structure comprises 545 residues: Chaperonin GroEL 2 (545 aa).

ATP-binding positions include Thr-30–Pro-33, Lys-51, Asp-87–Thr-91, Gly-415, and Asp-494. Residues Glu-526 to Met-545 form a disordered region. A compositionally biased stretch (gly residues) spans Pro-536 to Met-545.

Belongs to the chaperonin (HSP60) family. In terms of assembly, forms a cylinder of 14 subunits composed of two heptameric rings stacked back-to-back. Interacts with the co-chaperonin GroES.

It is found in the cytoplasm. The catalysed reaction is ATP + H2O + a folded polypeptide = ADP + phosphate + an unfolded polypeptide.. Together with its co-chaperonin GroES, plays an essential role in assisting protein folding. The GroEL-GroES system forms a nano-cage that allows encapsulation of the non-native substrate proteins and provides a physical environment optimized to promote and accelerate protein folding. This is Chaperonin GroEL 2 from Syntrophus aciditrophicus (strain SB).